The primary structure comprises 295 residues: Glycine N-acyltransferase (295 aa).

3 positions are modified to N6-acetyllysine; alternate: Lys-15, Lys-126, and Lys-140. 3 positions are modified to N6-succinyllysine; alternate: Lys-15, Lys-126, and Lys-140. Position 158 is an N6-acetyllysine (Lys-158). Lys-168 carries the N6-succinyllysine modification. An N6-acetyllysine; alternate modification is found at Lys-255. At Lys-255 the chain carries N6-succinyllysine; alternate.

It belongs to the glycine N-acyltransferase family. In terms of tissue distribution, detected in liver (at protein level).

Its subcellular location is the mitochondrion. The enzyme catalyses an acyl-CoA + glycine = an N-acylglycine + CoA + H(+). The catalysed reaction is benzoyl-CoA + glycine = N-benzoylglycine + CoA + H(+). In terms of biological role, mitochondrial acyltransferase which transfers an acyl group to the N-terminus of glycine and glutamine, although much less efficiently. Can conjugate a multitude of substrates to form a variety of N-acylglycines, thereby detoxify xenobiotics, such as benzoic acid or salicylic acid, and endogenous organic acids, such as isovaleric acid. In Bos taurus (Bovine), this protein is Glycine N-acyltransferase (GLYAT).